Here is a 635-residue protein sequence, read N- to C-terminus: Biosynthetic arginine decarboxylase (635 aa).

Lys101 is subject to N6-(pyridoxal phosphate)lysine. Substrate is bound at residue 284 to 294; the sequence is VDVGGGLGVDY.

This sequence belongs to the Orn/Lys/Arg decarboxylase class-II family. SpeA subfamily. It depends on Mg(2+) as a cofactor. Pyridoxal 5'-phosphate is required as a cofactor.

It catalyses the reaction L-arginine + H(+) = agmatine + CO2. It participates in amine and polyamine biosynthesis; agmatine biosynthesis; agmatine from L-arginine: step 1/1. In terms of biological role, catalyzes the biosynthesis of agmatine from arginine. The polypeptide is Biosynthetic arginine decarboxylase (Tolumonas auensis (strain DSM 9187 / NBRC 110442 / TA 4)).